The following is a 628-amino-acid chain: DEAD-box ATP-dependent RNA helicase 9 (628 aa).

Residues 98–126 (LEVAKLGISPKIVSQLASRGITKLFPIQR) carry the Q motif motif. A Helicase ATP-binding domain is found at 129-302 (LEPAMQGKDM…QKYLKNPVTI (174 aa)). 142–149 (AKTGTGKT) serves as a coordination point for ATP. The DEAD box motif lies at 250–253 (DEAD). One can recognise a Helicase C-terminal domain in the interval 331 to 478 (VLGELIKEHA…KINVEGSDLM (148 aa)). 2 disordered regions span residues 496 to 548 (GSYG…SGFG) and 571 to 628 (SGFG…FGSS). Residues 500-509 (RRGSFGSSSS) are compositionally biased toward low complexity. Gly residues predominate over residues 510–548 (RGGGFGDSGFGRSGGGFGRSGGGGFGRSSGGGFGDSGFG).

The protein belongs to the DEAD box helicase family. DDX21/DDX50 subfamily.

The enzyme catalyses ATP + H2O = ADP + phosphate + H(+). The chain is DEAD-box ATP-dependent RNA helicase 9 from Oryza sativa subsp. japonica (Rice).